Consider the following 555-residue polypeptide: Urocanate hydratase (555 aa).

Residues 52-53 (GG), Gln130, 176-178 (GMG), Glu196, Arg201, 242-243 (NA), 263-267 (QTSAH), 272-273 (YL), and Tyr321 each bind NAD(+). Residue Cys409 is part of the active site. Gly491 contributes to the NAD(+) binding site.

Belongs to the urocanase family. It depends on NAD(+) as a cofactor.

The protein localises to the cytoplasm. It carries out the reaction 4-imidazolone-5-propanoate = trans-urocanate + H2O. Its pathway is amino-acid degradation; L-histidine degradation into L-glutamate; N-formimidoyl-L-glutamate from L-histidine: step 2/3. In terms of biological role, catalyzes the conversion of urocanate to 4-imidazolone-5-propionate. This Nocardioides sp. (strain ATCC BAA-499 / JS614) protein is Urocanate hydratase.